A 678-amino-acid chain; its full sequence is Translation initiation factor eIF2B subunit epsilon (678 aa).

T172 is subject to Phosphothreonine. The disordered stretch occupies residues S467 to M489. S500 carries the phosphoserine modification. Residue T503 is modified to Phosphothreonine. Position 506 is a phosphoserine (S506). Residues D508–E674 enclose the W2 domain.

This sequence belongs to the eIF-2B gamma/epsilon subunits family. Component of the translation initiation factor 2B (eIF2B) complex which is a heterodecamer of two sets of five different subunits: alpha, beta, gamma, delta and epsilon. Subunits alpha, beta and delta comprise a regulatory subcomplex and subunits epsilon and gamma comprise a catalytic subcomplex. Within the complex, the hexameric regulatory complex resides at the center, with the two heterodimeric catalytic subcomplexes bound on opposite sides.

The protein localises to the cytoplasm. Its subcellular location is the cytosol. Its function is as follows. Acts as a component of the translation initiation factor 2B (eIF2B) complex, which catalyzes the exchange of GDP for GTP on the eukaryotic initiation factor 2 (eIF2) complex gamma subunit. Its guanine nucleotide exchange factor activity is repressed when bound to eIF2 complex phosphorylated on the alpha subunit, thereby limiting the amount of methionyl-initiator methionine tRNA available to the ribosome and consequently global translation is repressed. This chain is Translation initiation factor eIF2B subunit epsilon (tif225), found in Schizosaccharomyces pombe (strain 972 / ATCC 24843) (Fission yeast).